The primary structure comprises 458 residues: Phosphoglucosamine mutase (458 aa).

The active-site Phosphoserine intermediate is the serine 108. Mg(2+)-binding residues include serine 108, aspartate 247, aspartate 249, and aspartate 251. The residue at position 108 (serine 108) is a Phosphoserine.

The protein belongs to the phosphohexose mutase family. Mg(2+) is required as a cofactor. In terms of processing, activated by phosphorylation.

The catalysed reaction is alpha-D-glucosamine 1-phosphate = D-glucosamine 6-phosphate. Catalyzes the conversion of glucosamine-6-phosphate to glucosamine-1-phosphate. This chain is Phosphoglucosamine mutase, found in Nitrosomonas europaea (strain ATCC 19718 / CIP 103999 / KCTC 2705 / NBRC 14298).